We begin with the raw amino-acid sequence, 490 residues long: Glutamate--tRNA ligase (490 aa).

Residues 10–20 carry the 'HIGH' region motif; it reads PSPTGSLHIGG. Positions 251–255 match the 'KMSKS' region motif; sequence KLSKR. ATP is bound at residue lysine 254.

This sequence belongs to the class-I aminoacyl-tRNA synthetase family. Glutamate--tRNA ligase type 1 subfamily. As to quaternary structure, monomer.

It is found in the cytoplasm. The catalysed reaction is tRNA(Glu) + L-glutamate + ATP = L-glutamyl-tRNA(Glu) + AMP + diphosphate. In terms of biological role, catalyzes the attachment of glutamate to tRNA(Glu) in a two-step reaction: glutamate is first activated by ATP to form Glu-AMP and then transferred to the acceptor end of tRNA(Glu). The chain is Glutamate--tRNA ligase from Moorella thermoacetica (strain ATCC 39073 / JCM 9320).